We begin with the raw amino-acid sequence, 280 residues long: Ribosomal RNA small subunit methyltransferase A (280 aa).

Positions 13, 15, 40, 61, 85, and 105 each coordinate S-adenosyl-L-methionine.

It belongs to the class I-like SAM-binding methyltransferase superfamily. rRNA adenine N(6)-methyltransferase family. RsmA subfamily.

It is found in the cytoplasm. It carries out the reaction adenosine(1518)/adenosine(1519) in 16S rRNA + 4 S-adenosyl-L-methionine = N(6)-dimethyladenosine(1518)/N(6)-dimethyladenosine(1519) in 16S rRNA + 4 S-adenosyl-L-homocysteine + 4 H(+). Specifically dimethylates two adjacent adenosines (A1518 and A1519) in the loop of a conserved hairpin near the 3'-end of 16S rRNA in the 30S particle. May play a critical role in biogenesis of 30S subunits. The chain is Ribosomal RNA small subunit methyltransferase A from Phocaeicola vulgatus (strain ATCC 8482 / DSM 1447 / JCM 5826 / CCUG 4940 / NBRC 14291 / NCTC 11154) (Bacteroides vulgatus).